We begin with the raw amino-acid sequence, 265 residues long: Interleukin-2 receptor subunit alpha (265 aa).

A signal peptide spans 1 to 21 (MDSYLLMWGLLTLIMVPGCFA). Residues 22-84 (ELCDDDPPEI…SWDNQCQCTS (63 aa)) form the Sushi 1 domain. At 22 to 240 (ELCDDDPPEI…ETFIFTTEYQ (219 aa)) the chain is on the extracellular side. Disulfide bonds link Cys-24/Cys-67, Cys-49/Cys-80, and Cys-51/Cys-82. Asn-70 and Asn-89 each carry an N-linked (GlcNAc...) asparagine glycan. A compositionally biased stretch (polar residues) spans 87-98 (TRNTTKQVTPQP). Residues 87-123 (TRNTTKQVTPQPEEQKERKTTEMQSPMQPVDQASLPG) are disordered. The Sushi 2 domain occupies 123–186 (GHCREPPPWE…WTQPQLICTG (64 aa)). Disulfide bonds link Cys-125-Cys-168 and Cys-152-Cys-184. The segment at 190-210 (TSQFPGEEKPQASPEGRPESE) is disordered. Positions 195–209 (GEEKPQASPEGRPES) are enriched in basic and acidic residues. Residues 241–259 (VAVAGCVFLLISVLLLSGL) traverse the membrane as a helical segment. Residues 260 to 265 (TWQRRQ) lie on the Cytoplasmic side of the membrane.

As to quaternary structure, non-covalent dimer of an alpha and a beta subunit. IL2R exists in 3 different forms: a high affinity dimer, an intermediate affinity monomer (beta subunit), and a low affinity monomer (alpha subunit). The high and intermediate affinity forms also associate with a gamma subunit.

It localises to the membrane. Its function is as follows. Receptor for interleukin-2. The receptor is involved in the regulation of immune tolerance by controlling regulatory T cells (TREGs) activity. TREGs suppress the activation and expansion of autoreactive T-cells. This chain is Interleukin-2 receptor subunit alpha (IL2RA), found in Pan troglodytes (Chimpanzee).